We begin with the raw amino-acid sequence, 468 residues long: Phosphomethylpyrimidine synthase (468 aa).

Residues Asn82, Met111, Tyr141, His177, 197-199, 238-241, and Glu277 contribute to the substrate site; these read SRG and DSLR. His281 contacts Zn(2+). Tyr304 is a substrate binding site. His345 is a binding site for Zn(2+). Residues Cys425, Cys428, and Cys433 each coordinate [4Fe-4S] cluster.

Belongs to the ThiC family. The cofactor is [4Fe-4S] cluster.

It carries out the reaction 5-amino-1-(5-phospho-beta-D-ribosyl)imidazole + S-adenosyl-L-methionine = 4-amino-2-methyl-5-(phosphooxymethyl)pyrimidine + CO + 5'-deoxyadenosine + formate + L-methionine + 3 H(+). It functions in the pathway cofactor biosynthesis; thiamine diphosphate biosynthesis. Its function is as follows. Catalyzes the synthesis of the hydroxymethylpyrimidine phosphate (HMP-P) moiety of thiamine from aminoimidazole ribotide (AIR) in a radical S-adenosyl-L-methionine (SAM)-dependent reaction. The polypeptide is Phosphomethylpyrimidine synthase (Prochlorococcus marinus (strain SARG / CCMP1375 / SS120)).